A 380-amino-acid chain; its full sequence is 5-amino-6-(D-ribitylamino)uracil--L-tyrosine 4-hydroxyphenyl transferase (380 aa).

The Radical SAM core domain maps to 56–303 (VTYIINRNIN…GAVARIYLGN (248 aa)). Positions 70, 74, and 77 each coordinate [4Fe-4S] cluster.

It belongs to the radical SAM superfamily. CofH family. Consists of two subunits, CofG and CofH. [4Fe-4S] cluster serves as cofactor.

It carries out the reaction 5-amino-6-(D-ribitylamino)uracil + L-tyrosine + S-adenosyl-L-methionine = 5-amino-5-(4-hydroxybenzyl)-6-(D-ribitylimino)-5,6-dihydrouracil + 2-iminoacetate + 5'-deoxyadenosine + L-methionine + H(+). It functions in the pathway cofactor biosynthesis; coenzyme F0 biosynthesis. Functionally, catalyzes the radical-mediated synthesis of 5-amino-5-(4-hydroxybenzyl)-6-(D-ribitylimino)-5,6-dihydrouracil from 5-amino-6-(D-ribitylamino)uracil and L-tyrosine. The chain is 5-amino-6-(D-ribitylamino)uracil--L-tyrosine 4-hydroxyphenyl transferase from Nostoc punctiforme (strain ATCC 29133 / PCC 73102).